Reading from the N-terminus, the 382-residue chain is Protein phosphatase 1A (382 aa).

A lipid anchor (N-myristoyl glycine) is attached at glycine 2. The PPM-type phosphatase domain occupies 23-291 (RYGLSSMQGW…DNMSVILICF (269 aa)). Mn(2+) is bound by residues aspartate 60, glycine 61, aspartate 239, and aspartate 282. Phosphoserine is present on residues serine 375 and serine 377.

It belongs to the PP2C family. Monomer. Interacts with SMAD2; the interaction dephosphorylates SMAD2 in its C-terminal SXS motif resulting in disruption of the SMAD2/SMAD4 complex, SMAD2 nuclear export and termination of the TGF-beta-mediated signaling. Interacts with SMAD2; the interaction dephosphorylates SMAD2 in its C-terminal SXS motif resulting in disruption of the SMAD2/SMAD4 complex, SMAD2 nuclear export and termination of the TGF-beta-mediated signaling. Interacts with the phosphorylated form of IKBKB/IKKB. Mg(2+) serves as cofactor. Requires Mn(2+) as cofactor. In terms of processing, N-myristoylation is essential for the recognition of its substrates for dephosphorylation.

Its subcellular location is the nucleus. It localises to the cytoplasm. The protein localises to the cytosol. The protein resides in the membrane. The catalysed reaction is O-phospho-L-seryl-[protein] + H2O = L-seryl-[protein] + phosphate. It carries out the reaction O-phospho-L-threonyl-[protein] + H2O = L-threonyl-[protein] + phosphate. Enzyme with a broad specificity. Negatively regulates TGF-beta signaling through dephosphorylating SMAD2 and SMAD3, resulting in their dissociation from SMAD4, nuclear export of the SMADs and termination of the TGF-beta-mediated signaling. Dephosphorylates PRKAA1 and PRKAA2. Plays an important role in the termination of TNF-alpha-mediated NF-kappa-B activation through dephosphorylating and inactivating IKBKB/IKKB. The chain is Protein phosphatase 1A (PPM1A) from Bos taurus (Bovine).